The primary structure comprises 110 residues: UPF0122 protein SH1678 (110 aa).

Belongs to the UPF0122 family.

In terms of biological role, might take part in the signal recognition particle (SRP) pathway. This is inferred from the conservation of its genetic proximity to ftsY/ffh. May be a regulatory protein. The sequence is that of UPF0122 protein SH1678 from Staphylococcus haemolyticus (strain JCSC1435).